A 137-amino-acid polypeptide reads, in one-letter code: Large ribosomal subunit protein uL16 (137 aa).

This sequence belongs to the universal ribosomal protein uL16 family. In terms of assembly, part of the 50S ribosomal subunit.

Functionally, binds 23S rRNA and is also seen to make contacts with the A and possibly P site tRNAs. The polypeptide is Large ribosomal subunit protein uL16 (Agrobacterium fabrum (strain C58 / ATCC 33970) (Agrobacterium tumefaciens (strain C58))).